The primary structure comprises 159 residues: NAD(P)H-quinone oxidoreductase subunit N (159 aa).

Belongs to the complex I NdhN subunit family. As to quaternary structure, NDH-1 can be composed of about 15 different subunits; different subcomplexes with different compositions have been identified which probably have different functions.

It is found in the cell inner membrane. It catalyses the reaction a plastoquinone + NADH + (n+1) H(+)(in) = a plastoquinol + NAD(+) + n H(+)(out). It carries out the reaction a plastoquinone + NADPH + (n+1) H(+)(in) = a plastoquinol + NADP(+) + n H(+)(out). Its function is as follows. NDH-1 shuttles electrons from an unknown electron donor, via FMN and iron-sulfur (Fe-S) centers, to quinones in the respiratory and/or the photosynthetic chain. The immediate electron acceptor for the enzyme in this species is believed to be plastoquinone. Couples the redox reaction to proton translocation, and thus conserves the redox energy in a proton gradient. Cyanobacterial NDH-1 also plays a role in inorganic carbon-concentration. This Gloeobacter violaceus (strain ATCC 29082 / PCC 7421) protein is NAD(P)H-quinone oxidoreductase subunit N.